The following is a 980-amino-acid chain: GPI inositol-deacylase (980 aa).

The Cytoplasmic segment spans residues 1-7 (MFMFRNC). Residues 8-28 (AVLLVIGSICCFIYGLFRLHV) traverse the membrane as a helical segment. The Lumenal portion of the chain corresponds to 29–628 (EVEPNACRMT…EYSYSSALSR (600 aa)). S170 is an active-site residue. N-linked (GlcNAc...) asparagine glycosylation is found at N427, N517, and N596. The helical transmembrane segment at 629-649 (LVLEFYGWLPAHLVCVLLIVL) threads the bilayer. Residues 650–709 (RKQVETFYDVGTFRSLRPYVGYLQYTSLYIVTACRLLKKLIISSRVFPEPEPLDYSINVS) are Cytoplasmic-facing. The chain crosses the membrane as a helical span at residues 710 to 730 (IVIHCAAIALSLLATLGTWLA). The Lumenal segment spans residues 731-774 (LTLYGNAFYRLALRITRLSQATSNVMISIMTHLPITYGILTIAT). A helical transmembrane segment spans residues 775–795 (AMGTCSGVGLLLAFVFYFLML). Topologically, residues 796 to 867 (SNAYKDYLED…CVGLQNFSFH (72 aa)) are cytoplasmic. The disordered stretch occupies residues 821–853 (AVTEQEDATEEQNEEQNALKQNDEQKQQQQEEE). Over residues 824–834 (EQEDATEEQNE) the composition is skewed to acidic residues. The chain crosses the membrane as a helical span at residues 868–888 (VTLLLMLFVQLLLNAPSSLAW). The Lumenal portion of the chain corresponds to 889–895 (LRSRRHG). Residues 896-916 (INLPDPSLYPSIVVLASLSLL) traverse the membrane as a helical segment. The Cytoplasmic portion of the chain corresponds to 917-929 (LQLRAPQKCQGYW). Residues 930-950 (MLSIAFYILAGVVLLYCQAAI) traverse the membrane as a helical segment. Residues 951–954 (YRLT) lie on the Lumenal side of the membrane. The chain crosses the membrane as a helical span at residues 955-975 (YVIAGAFALLSAHQSLWILWG). The Cytoplasmic segment spans residues 976-980 (RVSRV).

Belongs to the GPI inositol-deacylase family.

Its subcellular location is the endoplasmic reticulum membrane. In terms of biological role, involved in inositol deacylation of GPI-anchored proteins. This chain is GPI inositol-deacylase, found in Drosophila melanogaster (Fruit fly).